Consider the following 160-residue polypeptide: Globin-like protein (160 aa).

The Globin domain occupies S2–K152. H101 serves as a coordination point for heme.

Belongs to the globin family.

The protein resides in the cytoplasm. Its function is as follows. May be a globin and may play a role in oxygen transport. This is Globin-like protein (glb-1) from Caenorhabditis briggsae.